The following is a 462-amino-acid chain: SET domain-containing protein SmydA-8, isoform A (462 aa).

An SET domain is found at 55 to 287; that stretch reads PNWTISSSTV…KGGEITTTYT (233 aa).

The protein belongs to the class V-like SAM-binding methyltransferase superfamily.

The polypeptide is SET domain-containing protein SmydA-8, isoform A (Drosophila melanogaster (Fruit fly)).